A 339-amino-acid chain; its full sequence is Ketol-acid reductoisomerase (NADP(+)) (339 aa).

The 182-residue stretch at 1–182 folds into the KARI N-terminal Rossmann domain; that stretch reads MRVYYDRDAD…GGGRSGVIET (182 aa). NADP(+) is bound by residues 24 to 27, Arg-48, Ser-51, Thr-53, and 83 to 86; these read YGSQ and DELQ. His-108 is an active-site residue. Residue Gly-134 coordinates NADP(+). The 146-residue stretch at 183-328 folds into the KARI C-terminal knotted domain; it reads TFKEECETDL…GKLRAMMPWI (146 aa). The Mg(2+) site is built by Asp-191, Glu-195, Glu-227, and Glu-231. Substrate is bound at residue Ser-252.

The protein belongs to the ketol-acid reductoisomerase family. The cofactor is Mg(2+).

The catalysed reaction is (2R)-2,3-dihydroxy-3-methylbutanoate + NADP(+) = (2S)-2-acetolactate + NADPH + H(+). It carries out the reaction (2R,3R)-2,3-dihydroxy-3-methylpentanoate + NADP(+) = (S)-2-ethyl-2-hydroxy-3-oxobutanoate + NADPH + H(+). Its pathway is amino-acid biosynthesis; L-isoleucine biosynthesis; L-isoleucine from 2-oxobutanoate: step 2/4. It participates in amino-acid biosynthesis; L-valine biosynthesis; L-valine from pyruvate: step 2/4. In terms of biological role, involved in the biosynthesis of branched-chain amino acids (BCAA). Catalyzes an alkyl-migration followed by a ketol-acid reduction of (S)-2-acetolactate (S2AL) to yield (R)-2,3-dihydroxy-isovalerate. In the isomerase reaction, S2AL is rearranged via a Mg-dependent methyl migration to produce 3-hydroxy-3-methyl-2-ketobutyrate (HMKB). In the reductase reaction, this 2-ketoacid undergoes a metal-dependent reduction by NADPH to yield (R)-2,3-dihydroxy-isovalerate. The sequence is that of Ketol-acid reductoisomerase (NADP(+)) from Brucella canis (strain ATCC 23365 / NCTC 10854 / RM-666).